The primary structure comprises 495 residues: Glutamate--tRNA ligase 1 (495 aa).

The short motif at 10-20 (PSPTGALHMGG) is the 'HIGH' region element. The short motif at 251–255 (KLSKR) is the 'KMSKS' region element. Position 254 (Lys254) interacts with ATP.

This sequence belongs to the class-I aminoacyl-tRNA synthetase family. Glutamate--tRNA ligase type 1 subfamily. As to quaternary structure, monomer.

It localises to the cytoplasm. It catalyses the reaction tRNA(Glu) + L-glutamate + ATP = L-glutamyl-tRNA(Glu) + AMP + diphosphate. Its function is as follows. Catalyzes the attachment of glutamate to tRNA(Glu) in a two-step reaction: glutamate is first activated by ATP to form Glu-AMP and then transferred to the acceptor end of tRNA(Glu). In Syntrophomonas wolfei subsp. wolfei (strain DSM 2245B / Goettingen), this protein is Glutamate--tRNA ligase 1.